The following is a 922-amino-acid chain: Alpha-actinin, sarcomeric (922 aa).

The interval methionine 1 to histidine 252 is actin-binding. Calponin-homology (CH) domains follow at residues lysine 36–alanine 140 and methionine 149–glutamine 255. Spectrin repeat units follow at residues alanine 253–aspartate 393, isoleucine 394–arginine 508, isoleucine 509–leucine 629, and isoleucine 630–threonine 742. EF-hand domains follow at residues glutamate 776 to serine 811 and glutamine 817 to aspartate 852. Positions 789, 791, 793, 795, and 800 each coordinate Ca(2+).

Belongs to the alpha-actinin family. In terms of assembly, homodimer; antiparallel.

Its function is as follows. F-actin cross-linking protein which is thought to anchor actin to a variety of intracellular structures. This is a bundling protein. The protein is Alpha-actinin, sarcomeric (Actn) of Anopheles gambiae (African malaria mosquito).